Reading from the N-terminus, the 176-residue chain is Immunity factor for TNT homolog (176 aa).

As to quaternary structure, interacts with the tuberculosis necrotizing toxin (TNT) homolog, the C-terminal domain of the outer membrane channel protein CpnT.

Functionally, antitoxin for tuberculosis necrotizing toxin (TNT) homolog. Acts by binding directly to TNT, which inhibits NAD(+) glycohydrolase activity of TNT and protects M.bovis from self-poisoning. The polypeptide is Immunity factor for TNT homolog (Mycobacterium bovis (strain BCG / Pasteur 1173P2)).